A 623-amino-acid polypeptide reads, in one-letter code: Membralin-like protein At1g60995 (623 aa).

Residues 24-44 (GFLEYTYLFVAITLFCILVVM) form a helical membrane-spanning segment. The disordered stretch occupies residues 99 to 119 (SLEVSKTDQESSTSEENTDDT). 4 consecutive transmembrane segments (helical) span residues 315-335 (GVLM…SFTL), 363-383 (IFVH…ILFF), 392-412 (LLAF…LISV), and 424-444 (FFLL…YGFS). Disordered stretches follow at residues 506 to 567 (NRTT…QAGA) and 602 to 623 (EAQV…LSVD). The span at 514–531 (PSGPNHTTPNQNTETRSF) shows a compositional bias: polar residues.

The protein belongs to the membralin family.

It is found in the membrane. This Arabidopsis thaliana (Mouse-ear cress) protein is Membralin-like protein At1g60995.